Reading from the N-terminus, the 216-residue chain is Orotate phosphoribosyltransferase (216 aa).

Lys30 serves as a coordination point for 5-phospho-alpha-D-ribose 1-diphosphate. 38–39 (FF) provides a ligand contact to orotate. Residues 75-76 (YK), Arg102, Lys103, Lys106, His108, and 128-136 (DDVITAGTA) contribute to the 5-phospho-alpha-D-ribose 1-diphosphate site. Residues Thr132 and Arg160 each coordinate orotate.

Belongs to the purine/pyrimidine phosphoribosyltransferase family. PyrE subfamily. Homodimer. It depends on Mg(2+) as a cofactor.

The enzyme catalyses orotidine 5'-phosphate + diphosphate = orotate + 5-phospho-alpha-D-ribose 1-diphosphate. It functions in the pathway pyrimidine metabolism; UMP biosynthesis via de novo pathway; UMP from orotate: step 1/2. In terms of biological role, catalyzes the transfer of a ribosyl phosphate group from 5-phosphoribose 1-diphosphate to orotate, leading to the formation of orotidine monophosphate (OMP). The sequence is that of Orotate phosphoribosyltransferase from Acinetobacter baumannii (strain AB307-0294).